Reading from the N-terminus, the 127-residue chain is uncharacterized protein (127 aa).

This is an uncharacterized protein from Thermoproteus tenax (TTV1).